The following is a 123-amino-acid chain: uncharacterized protein (123 aa).

The interval 1-24 is disordered; the sequence is MGGGGPPARVQGTEGSQTGGGAVA.

This is an uncharacterized protein from Halorubrum pleomorphic virus 1 (HRPV-1).